The sequence spans 727 residues: Glucans biosynthesis glucosyltransferase H (727 aa).

Positions 18–38 (SAMPNERPGAMEPQNLSKMPE) are disordered. 7 consecutive transmembrane segments (helical) span residues 58–78 (FLVV…MGAV), 97–117 (VNFC…LILL), 278–298 (LQQF…GWWV), 408–428 (IMAY…LMLA), 460–480 (LFYI…LLLL), 496–516 (IFSV…MMFI), and 572–592 (LLAW…ISAW).

The protein belongs to the glycosyltransferase 2 family. OpgH subfamily.

The protein localises to the cell inner membrane. It participates in glycan metabolism; osmoregulated periplasmic glucan (OPG) biosynthesis. Functionally, involved in the biosynthesis of osmoregulated periplasmic glucans (OPGs). This is Glucans biosynthesis glucosyltransferase H from Shewanella baltica (strain OS185).